A 113-amino-acid chain; its full sequence is Large ribosomal subunit protein eL31B (113 aa).

It belongs to the eukaryotic ribosomal protein eL31 family. As to quaternary structure, component of the large ribosomal subunit (LSU). Mature yeast ribosomes consist of a small (40S) and a large (60S) subunit. The 40S small subunit contains 1 molecule of ribosomal RNA (18S rRNA) and 33 different proteins (encoded by 57 genes). The large 60S subunit contains 3 rRNA molecules (25S, 5.8S and 5S rRNA) and 46 different proteins (encoded by 81 genes).

The protein resides in the cytoplasm. Functionally, component of the ribosome, a large ribonucleoprotein complex responsible for the synthesis of proteins in the cell. The small ribosomal subunit (SSU) binds messenger RNAs (mRNAs) and translates the encoded message by selecting cognate aminoacyl-transfer RNA (tRNA) molecules. The large subunit (LSU) contains the ribosomal catalytic site termed the peptidyl transferase center (PTC), which catalyzes the formation of peptide bonds, thereby polymerizing the amino acids delivered by tRNAs into a polypeptide chain. The nascent polypeptides leave the ribosome through a tunnel in the LSU and interact with protein factors that function in enzymatic processing, targeting, and the membrane insertion of nascent chains at the exit of the ribosomal tunnel. The polypeptide is Large ribosomal subunit protein eL31B (Saccharomyces cerevisiae (strain ATCC 204508 / S288c) (Baker's yeast)).